A 295-amino-acid chain; its full sequence is Light-independent protochlorophyllide reductase iron-sulfur ATP-binding protein (295 aa).

Residues 39–44 (GIGKST) and lysine 68 each bind ATP. Serine 43 contributes to the Mg(2+) binding site. Cysteine 124 and cysteine 158 together coordinate [4Fe-4S] cluster. Residue 209 to 210 (NR) coordinates ATP.

The protein belongs to the NifH/BchL/ChlL family. As to quaternary structure, homodimer. Protochlorophyllide reductase is composed of three subunits; ChlL, ChlN and ChlB. It depends on [4Fe-4S] cluster as a cofactor.

It carries out the reaction chlorophyllide a + oxidized 2[4Fe-4S]-[ferredoxin] + 2 ADP + 2 phosphate = protochlorophyllide a + reduced 2[4Fe-4S]-[ferredoxin] + 2 ATP + 2 H2O. It participates in porphyrin-containing compound metabolism; chlorophyll biosynthesis (light-independent). In terms of biological role, component of the dark-operative protochlorophyllide reductase (DPOR) that uses Mg-ATP and reduced ferredoxin to reduce ring D of protochlorophyllide (Pchlide) to form chlorophyllide a (Chlide). This reaction is light-independent. The L component serves as a unique electron donor to the NB-component of the complex, and binds Mg-ATP. This Prochlorococcus marinus (strain MIT 9215) protein is Light-independent protochlorophyllide reductase iron-sulfur ATP-binding protein.